A 431-amino-acid chain; its full sequence is Enolase (431 aa).

Gln-163 is a (2R)-2-phosphoglycerate binding site. The active-site Proton donor is the Glu-205. Mg(2+) is bound by residues Asp-242, Glu-288, and Asp-315. (2R)-2-phosphoglycerate contacts are provided by Lys-340, Arg-369, Ser-370, and Lys-391. Lys-340 (proton acceptor) is an active-site residue.

The protein belongs to the enolase family. Mg(2+) is required as a cofactor.

It is found in the cytoplasm. It localises to the secreted. Its subcellular location is the cell surface. The catalysed reaction is (2R)-2-phosphoglycerate = phosphoenolpyruvate + H2O. The protein operates within carbohydrate degradation; glycolysis; pyruvate from D-glyceraldehyde 3-phosphate: step 4/5. Its function is as follows. Catalyzes the reversible conversion of 2-phosphoglycerate (2-PG) into phosphoenolpyruvate (PEP). It is essential for the degradation of carbohydrates via glycolysis. This chain is Enolase, found in Acholeplasma laidlawii (strain PG-8A).